We begin with the raw amino-acid sequence, 427 residues long: Glutamate-1-semialdehyde 2,1-aminomutase (427 aa).

Residue Lys263 is modified to N6-(pyridoxal phosphate)lysine.

It belongs to the class-III pyridoxal-phosphate-dependent aminotransferase family. HemL subfamily. Homodimer. Pyridoxal 5'-phosphate serves as cofactor.

It localises to the cytoplasm. The catalysed reaction is (S)-4-amino-5-oxopentanoate = 5-aminolevulinate. Its pathway is porphyrin-containing compound metabolism; protoporphyrin-IX biosynthesis; 5-aminolevulinate from L-glutamyl-tRNA(Glu): step 2/2. The polypeptide is Glutamate-1-semialdehyde 2,1-aminomutase (Caldicellulosiruptor saccharolyticus (strain ATCC 43494 / DSM 8903 / Tp8T 6331)).